Reading from the N-terminus, the 212-residue chain is Inactive ribonuclease-like protein 10 (212 aa).

The first 24 residues, Met-1–Gly-24, serve as a signal peptide directing secretion. Residues Asn-129 and Asn-204 are each glycosylated (N-linked (GlcNAc...) asparagine).

The protein belongs to the pancreatic ribonuclease family. Post-translationally, the N-terminus is blocked. Glycosylated. Male-specific expression in proximal caput of the epididymis.

It localises to the secreted. Secreted proximal epididymal protein required for post-testicular sperm maturation and male fertility. May be involved in sperm adhesion to the egg zona pellucida. Does not have ribonuclease activity. This is Inactive ribonuclease-like protein 10 (Rnase10) from Rattus norvegicus (Rat).